The chain runs to 145 residues: MLSIFKNLLGTSEEDGTTQEANSKDTKGLKEERKRKKRKNKYKIPPGHTQQDWDALVASGKNLSGVESPISVTAEELAKHCSPDDCWMAIRGKVYNVTAYLPYHPVGPKKILKHSGVDATKPYLKHHDWVNEEELLKTSFVGYLV.

The tract at residues 1–49 (MLSIFKNLLGTSEEDGTTQEANSKDTKGLKEERKRKKRKNKYKIPPGHT) is disordered. Residues 22–32 (NSKDTKGLKEE) show a composition bias toward basic and acidic residues. Positions 33-42 (RKRKKRKNKY) are enriched in basic residues. At S68 the chain carries Phosphoserine. In terms of domain architecture, Cytochrome b5 heme-binding spans 69-145 (PISVTAEELA…LKTSFVGYLV (77 aa)). Heme contacts are provided by H104 and H127.

The protein belongs to the cytochrome b5 family.

The protein resides in the cytoplasm. This is an uncharacterized protein from Schizosaccharomyces pombe (strain 972 / ATCC 24843) (Fission yeast).